The following is a 305-amino-acid chain: Serine/threonine-protein phosphatase 6 catalytic subunit (305 aa).

4 residues coordinate Mn(2+): D54, H56, D82, and N114. The active-site Proton donor is H115. Mn(2+)-binding residues include H164 and H238.

It belongs to the PPP phosphatase family. PP-6 (PP-V) subfamily. Mn(2+) serves as cofactor.

It catalyses the reaction O-phospho-L-seryl-[protein] + H2O = L-seryl-[protein] + phosphate. The catalysed reaction is O-phospho-L-threonyl-[protein] + H2O = L-threonyl-[protein] + phosphate. This Dictyostelium discoideum (Social amoeba) protein is Serine/threonine-protein phosphatase 6 catalytic subunit (ppp6c).